The chain runs to 260 residues: Thiazole synthase (260 aa).

Lys-96 (schiff-base intermediate with DXP) is an active-site residue. Residues Gly-157, 184–185 (AG), and 206–207 (NT) contribute to the 1-deoxy-D-xylulose 5-phosphate site.

It belongs to the ThiG family. As to quaternary structure, homotetramer. Forms heterodimers with either ThiH or ThiS.

It localises to the cytoplasm. It catalyses the reaction [ThiS sulfur-carrier protein]-C-terminal-Gly-aminoethanethioate + 2-iminoacetate + 1-deoxy-D-xylulose 5-phosphate = [ThiS sulfur-carrier protein]-C-terminal Gly-Gly + 2-[(2R,5Z)-2-carboxy-4-methylthiazol-5(2H)-ylidene]ethyl phosphate + 2 H2O + H(+). It functions in the pathway cofactor biosynthesis; thiamine diphosphate biosynthesis. Functionally, catalyzes the rearrangement of 1-deoxy-D-xylulose 5-phosphate (DXP) to produce the thiazole phosphate moiety of thiamine. Sulfur is provided by the thiocarboxylate moiety of the carrier protein ThiS. In vitro, sulfur can be provided by H(2)S. The chain is Thiazole synthase from Bradyrhizobium sp. (strain BTAi1 / ATCC BAA-1182).